The following is a 26-amino-acid chain: Delta-conotoxin Am2766 (26 aa).

Intrachain disulfides connect Cys-1/Cys-16, Cys-8/Cys-20, and Cys-15/Cys-24. Position 26 is a glutamic acid 1-amide (Glu-26).

As to expression, expressed by the venom duct.

It localises to the secreted. Functionally, delta-conotoxins bind to site 6 of voltage-gated sodium channels (Nav) and inhibit the inactivation process. This is Delta-conotoxin Am2766 from Conus amadis (Amadis cone).